Reading from the N-terminus, the 589-residue chain is Coiled-coil domain-containing protein 22 homolog (589 aa).

Coiled coils occupy residues 287-426 (KTPL…LQTK) and 523-589 (CEEL…TSRQ). Residues 568–589 (EMQNESQRLEESIRRMEVTSRQ) are disordered. A compositionally biased stretch (basic and acidic residues) spans 574-589 (QRLEESIRRMEVTSRQ).

This sequence belongs to the CCDC22 family.

The chain is Coiled-coil domain-containing protein 22 homolog from Aedes aegypti (Yellowfever mosquito).